We begin with the raw amino-acid sequence, 710 residues long: Probable threonine--tRNA ligase 1, cytoplasmic (710 aa).

A disordered region spans residues 1–35 (MSDSQENKPVETPTEVKPVAEKKPAAEKKEKKPAV). Residues 18–33 (PVAEKKPAAEKKEKKP) are compositionally biased toward basic and acidic residues. The TGS domain occupies 72-137 (KEEPINVTLP…EADCNLQLCK (66 aa)).

It belongs to the class-II aminoacyl-tRNA synthetase family.

The protein localises to the cytoplasm. The enzyme catalyses tRNA(Thr) + L-threonine + ATP = L-threonyl-tRNA(Thr) + AMP + diphosphate + H(+). This chain is Probable threonine--tRNA ligase 1, cytoplasmic (thrS1), found in Dictyostelium discoideum (Social amoeba).